Consider the following 319-residue polypeptide: MGLTVLALIGGYIVVLGVAAWALDAFTGLSGTGVAFMLSLLALAMVLVQWLFSPYIINMVYRTREPLPGEEWIVAEVEQLARRSGLKPPKVVVSEMNMPNAFAYGSPIAGSYVAVTRGLLRLLPKDEVRAVLAHEVGHLKHRDVTVILALSLIPIAAFLIGRTLVWAGILGGGGGERRGNPMALVAVGAALLAAGMVFQLIVSHFNRLREYYADAHSALVTGSPRSLQRALARIHAAYEHNPHLVEEARSNEMASMLFIVAPLTSLTASPLVDVDYLVERLKEQETNPLVELFSTHPPVSKRLRFLDRLASRIGGIEHY.

2 helical membrane-spanning segments follow: residues 3–23 (LTVL…AWAL) and 32–52 (TGVA…QWLF). Histidine 134 provides a ligand contact to Zn(2+). Residue glutamate 135 is part of the active site. Histidine 138 contacts Zn(2+). 2 helical membrane-spanning segments follow: residues 146 to 166 (VILA…TLVW) and 182 to 202 (MALV…QLIV). Glutamate 210 is a Zn(2+) binding site.

Belongs to the peptidase M48B family. The cofactor is Zn(2+).

Its subcellular location is the cell membrane. In Aeropyrum pernix (strain ATCC 700893 / DSM 11879 / JCM 9820 / NBRC 100138 / K1), this protein is Protease HtpX homolog.